Consider the following 95-residue polypeptide: Protein RALF-like 16 (95 aa).

An N-terminal signal peptide occupies residues 1-29; sequence MVAYEKSPIVFLFATMMLVMFLFCGSGEA. Cystine bridges form between Cys-45-Cys-53 and Cys-65-Cys-71.

The protein belongs to the plant rapid alkalinization factor (RALF) family.

It is found in the secreted. Functionally, cell signaling peptide that may regulate plant stress, growth, and development. Mediates a rapid alkalinization of extracellular space by mediating a transient increase in the cytoplasmic Ca(2+) concentration leading to a calcium-dependent signaling events through a cell surface receptor and a concomitant activation of some intracellular mitogen-activated protein kinases. This is Protein RALF-like 16 (RALFL16) from Arabidopsis thaliana (Mouse-ear cress).